The following is a 93-amino-acid chain: uncharacterized protein (93 aa).

The protein resides in the plastid. Its subcellular location is the chloroplast. This is an uncharacterized protein from Diacronema lutheri (Unicellular marine alga).